A 399-amino-acid chain; its full sequence is Calsequestrin-2 (399 aa).

The N-terminal stretch at 1–19 (MKRTHLFIVGIYFLSSCRA) is a signal peptide. Tyr-282 carries the post-translational modification Phosphotyrosine. An N-linked (GlcNAc...) asparagine glycan is attached at Asn-335. The tract at residues 365-399 (VLSGKINTEDDDEDDDDDDNSDEEDNDDSDDDDDE) is disordered. Acidic residues predominate over residues 373–399 (EDDDEDDDDDDNSDEEDNDDSDDDDDE). Ser-385 and Ser-393 each carry phosphoserine.

The protein belongs to the calsequestrin family. Monomer, homodimer and homooligomer. Mostly monomeric in the absence of calcium. Forms higher oligomers in a calcium-dependent manner. Dimers associate to form tetramers, that then form linear homomer chains. Interacts with ASPH and TRDN. Post-translationally, phosphorylation in the C-terminus, probably by CK2, moderately increases calcium buffering capacity. In terms of processing, N-glycosylated.

The protein localises to the sarcoplasmic reticulum lumen. Its function is as follows. Calsequestrin is a high-capacity, moderate affinity, calcium-binding protein and thus acts as an internal calcium store in muscle. Calcium ions are bound by clusters of acidic residues at the protein surface, especially at the interface between subunits. Can bind around 60 Ca(2+) ions. Regulates the release of lumenal Ca(2+) via the calcium release channel RYR2; this plays an important role in triggering muscle contraction. Plays a role in excitation-contraction coupling in the heart and in regulating the rate of heart beats. The chain is Calsequestrin-2 (CASQ2) from Homo sapiens (Human).